Consider the following 698-residue polypeptide: Polyribonucleotide nucleotidyltransferase (698 aa).

The Mg(2+) site is built by Asp490 and Asp496. Positions Pro557–Ile616 constitute a KH domain. Residues Gly626–Arg694 enclose the S1 motif domain.

It belongs to the polyribonucleotide nucleotidyltransferase family. The cofactor is Mg(2+).

Its subcellular location is the cytoplasm. The enzyme catalyses RNA(n+1) + phosphate = RNA(n) + a ribonucleoside 5'-diphosphate. Functionally, involved in mRNA degradation. Catalyzes the phosphorolysis of single-stranded polyribonucleotides processively in the 3'- to 5'-direction. In Staphylococcus aureus (strain MRSA252), this protein is Polyribonucleotide nucleotidyltransferase.